Consider the following 334-residue polypeptide: DGAT1/2-independent enzyme synthesizing storage lipids (334 aa).

Residues 1–50 lie on the Lumenal side of the membrane; that stretch reads MTNKNQSFGVGQDSMSSMTCLIHVLEAWFGVEHLEDYWNFANYLLWVFTP. The N-linked (GlcNAc...) asparagine glycan is linked to Asn5. Residues 51-71 traverse the membrane as a helical segment; the sequence is LLLLILPYFTIFLLYLTIIFL. Residues 72–125 lie on the Cytoplasmic side of the membrane; that stretch reads HIYKRKNVLKEAYSHNLWDGARKTVATLWDGHAAVWHGYEVHGMEKIPEEGPAL. A helical membrane pass occupies residues 126–146; that stretch reads IIFYHGAIPIDFYYFMAKIFI. His130 is an active-site residue. Residues 147 to 334 are Lumenal-facing; that stretch reads HKGRTCRVVA…NKQKINQKTL (188 aa).

This sequence belongs to the diacylglycerol acyltransferase family. Highly divergent.

Its subcellular location is the endoplasmic reticulum membrane. It catalyses the reaction a 1,2-diacylglycerol + a 1,2-diacyl-sn-glycero-3-phosphocholine = a triacylglycerol + a 1-acyl-sn-glycero-3-phosphocholine. It carries out the reaction a 1-O-alkyl-2-acyl-sn-glycero-3-phosphocholine + a 1,2-diacylglycerol = a 1-O-alkyl-sn-glycero-3-phosphocholine + a triacylglycerol. The catalysed reaction is a 2-acylglycerol + an acyl-CoA = a 1,2-diacylglycerol + CoA. The enzyme catalyses an acyl-CoA + a 1,2-diacyl-sn-glycerol = a triacyl-sn-glycerol + CoA. It catalyses the reaction 2-(9Z-octadecenoyl)-glycerol + (9Z)-octadecenoyl-CoA = 1,2-di-(9Z-octadecenoyl)-glycerol + CoA. It carries out the reaction 1,2-di-(9Z-octadecenoyl)-sn-glycerol + (9Z)-octadecenoyl-CoA = 1,2,3-tri-(9Z-octadecenoyl)-glycerol + CoA. Its activity is regulated as follows. Acyltransferase activity is specifically inhibited by TMX1 at the endoplasmic reticulum, restricting accumulation of triacylglycerol. Functionally, catalytic subunit of the alternative triglyceride biosynthesis pathway, which mediates formation of triacylglycerol from diacylglycerol and membrane phospholipids. Synthesizes triacylglycerol at the expense of membrane phospholipids, such as phosphatidylcholine (PC) and its ether-linked form (ePC), thereby altering the composition of membranes. The alternative triglyceride biosynthesis pathway is probably required to provide the energy required for rapid growth when fuel sources are limiting. It maintains mitochondrial function during periods of extracellular lipid starvation. Can also use acyl-CoA as donor: acts as a acyl-CoA:monoacylglycerol acyltransferase (MGAT), but also shows acyl-CoA:diacylglycerol acyltransferase (DGAT) activity. The polypeptide is DGAT1/2-independent enzyme synthesizing storage lipids (TMEM68) (Bos taurus (Bovine)).